We begin with the raw amino-acid sequence, 387 residues long: Exodeoxyribonuclease 7 large subunit (387 aa).

The protein belongs to the XseA family. Heterooligomer composed of large and small subunits.

It is found in the cytoplasm. It carries out the reaction Exonucleolytic cleavage in either 5'- to 3'- or 3'- to 5'-direction to yield nucleoside 5'-phosphates.. Its function is as follows. Bidirectionally degrades single-stranded DNA into large acid-insoluble oligonucleotides, which are then degraded further into small acid-soluble oligonucleotides. This chain is Exodeoxyribonuclease 7 large subunit, found in Campylobacter jejuni subsp. jejuni serotype O:23/36 (strain 81-176).